A 159-amino-acid chain; its full sequence is SsrA-binding protein (159 aa).

The tract at residues 131-159 (KGKKLHDKRESEKERDWNRQKSRLLKDNG) is disordered. The span at 137–159 (DKRESEKERDWNRQKSRLLKDNG) shows a compositional bias: basic and acidic residues.

The protein belongs to the SmpB family.

The protein localises to the cytoplasm. In terms of biological role, required for rescue of stalled ribosomes mediated by trans-translation. Binds to transfer-messenger RNA (tmRNA), required for stable association of tmRNA with ribosomes. tmRNA and SmpB together mimic tRNA shape, replacing the anticodon stem-loop with SmpB. tmRNA is encoded by the ssrA gene; the 2 termini fold to resemble tRNA(Ala) and it encodes a 'tag peptide', a short internal open reading frame. During trans-translation Ala-aminoacylated tmRNA acts like a tRNA, entering the A-site of stalled ribosomes, displacing the stalled mRNA. The ribosome then switches to translate the ORF on the tmRNA; the nascent peptide is terminated with the 'tag peptide' encoded by the tmRNA and targeted for degradation. The ribosome is freed to recommence translation, which seems to be the essential function of trans-translation. This is SsrA-binding protein from Rhizobium etli (strain CIAT 652).